A 542-amino-acid polypeptide reads, in one-letter code: Chaperonin GroEL (542 aa).

Residues T29–P32, D86–T90, G413, N476–A478, and D492 contribute to the ATP site.

The protein belongs to the chaperonin (HSP60) family. Forms a cylinder of 14 subunits composed of two heptameric rings stacked back-to-back. Interacts with the co-chaperonin GroES.

Its subcellular location is the cytoplasm. The enzyme catalyses ATP + H2O + a folded polypeptide = ADP + phosphate + an unfolded polypeptide.. Its function is as follows. Together with its co-chaperonin GroES, plays an essential role in assisting protein folding. The GroEL-GroES system forms a nano-cage that allows encapsulation of the non-native substrate proteins and provides a physical environment optimized to promote and accelerate protein folding. This Lactococcus lactis subsp. cremoris (strain MG1363) protein is Chaperonin GroEL.